Reading from the N-terminus, the 508-residue chain is Light-independent protochlorophyllide reductase subunit B (508 aa).

[4Fe-4S] cluster is bound at residue Asp-36. The active-site Proton donor is the Asp-294. 429-430 (GM) contacts substrate.

Belongs to the ChlB/BchB/BchZ family. Protochlorophyllide reductase is composed of three subunits; ChlL, ChlN and ChlB. Forms a heterotetramer of two ChlB and two ChlN subunits. [4Fe-4S] cluster is required as a cofactor.

The catalysed reaction is chlorophyllide a + oxidized 2[4Fe-4S]-[ferredoxin] + 2 ADP + 2 phosphate = protochlorophyllide a + reduced 2[4Fe-4S]-[ferredoxin] + 2 ATP + 2 H2O. It functions in the pathway porphyrin-containing compound metabolism; chlorophyll biosynthesis (light-independent). Functionally, component of the dark-operative protochlorophyllide reductase (DPOR) that uses Mg-ATP and reduced ferredoxin to reduce ring D of protochlorophyllide (Pchlide) to form chlorophyllide a (Chlide). This reaction is light-independent. The NB-protein (ChlN-ChlB) is the catalytic component of the complex. The protein is Light-independent protochlorophyllide reductase subunit B of Synechocystis sp. (strain ATCC 27184 / PCC 6803 / Kazusa).